The chain runs to 412 residues: Tyrosine--tRNA ligase (412 aa).

A 'HIGH' region motif is present at residues 48–57 (PSRPDLHLGH). The 'KMSKS' region motif lies at 232-236 (KMSKS). Lys-235 provides a ligand contact to ATP. The S4 RNA-binding domain maps to 342–405 (VGLLNLMRHA…GKRRFARIRP (64 aa)).

The protein belongs to the class-I aminoacyl-tRNA synthetase family. TyrS type 2 subfamily. Homodimer.

It is found in the cytoplasm. It catalyses the reaction tRNA(Tyr) + L-tyrosine + ATP = L-tyrosyl-tRNA(Tyr) + AMP + diphosphate + H(+). In terms of biological role, catalyzes the attachment of tyrosine to tRNA(Tyr) in a two-step reaction: tyrosine is first activated by ATP to form Tyr-AMP and then transferred to the acceptor end of tRNA(Tyr). This chain is Tyrosine--tRNA ligase, found in Salinibacter ruber (strain DSM 13855 / M31).